We begin with the raw amino-acid sequence, 464 residues long: Trigger factor (464 aa).

In terms of domain architecture, PPIase FKBP-type spans 162 to 243 (GDFVSIDLSA…VKSVKERELP (82 aa)). Residues 431–464 (IDTSEFFGKRPSGDGAADEDADQADESTTADAGE) are disordered. The span at 446–455 (AADEDADQAD) shows a compositional bias: acidic residues.

Belongs to the FKBP-type PPIase family. Tig subfamily.

It localises to the cytoplasm. It carries out the reaction [protein]-peptidylproline (omega=180) = [protein]-peptidylproline (omega=0). Involved in protein export. Acts as a chaperone by maintaining the newly synthesized protein in an open conformation. Functions as a peptidyl-prolyl cis-trans isomerase. The protein is Trigger factor of Mycobacterium avium (strain 104).